The sequence spans 4545 residues: Prolow-density lipoprotein receptor-related protein 1 (4545 aa).

Residues 1–19 form the signal peptide; the sequence is MLTPPLLLLLPLLSALVAG. Topologically, residues 20–4424 are extracellular; that stretch reads ATMDAPKTCS…SQQQPGHMTS (4405 aa). 2 consecutive LDL-receptor class A domains span residues 27 to 66 and 72 to 110; these read TCSP…EICP and RCPP…AHCR. Intrachain disulfides connect C28/C41, C35/C54, C48/C65, C73/C86, C80/C99, and C93/C109. N-linked (GlcNAc...) asparagine glycosylation is found at N115, N137, N186, N240, and N275. 3 LDL-receptor class B repeats span residues 293-335, 336-379, and 380-423; these read GNFY…DPAM, GKVF…DLVS, and RLVY…FENY. N358 carries N-linked (GlcNAc...) asparagine glycosylation. N-linked (GlcNAc...) asparagine glycosylation occurs at N447. 4 LDL-receptor class B repeats span residues 572 to 614, 615 to 660, 661 to 711, and 712 to 755; these read GFIY…DWMG, DNLY…DPLN, GWMY…DIPA, and GRLY…HGNY. One copy of the HAT 1 repeat lies at 639-671; it reads TRKTLIEGKMTHPRAIVVDPLNGWMYWTDWEED. N730 is a glycosylation site (N-linked (GlcNAc...) asparagine). 8 consecutive LDL-receptor class A domains span residues 854–892, 895–933, 936–973, 976–1013, 1015–1053, 1062–1099, 1104–1142, and 1145–1184; these read QCQP…ALCH, TCPS…ATCS, TCPP…ASCA, TCFP…AGCS, SCSS…ANCT, GCHS…KGCE, VCDP…ENCE, and ACRP…ELCD. Intrachain disulfides connect C855–C867, C862–C880, C874–C891, C896–C908, C903–C921, C915–C932, C937–C949, C944–C962, C956–C972, C977–C990, C985–C1003, C997–C1012, C1016–C1028, C1023–C1041, C1035–C1052, C1063–C1076, C1070–C1089, C1083–C1098, C1105–C1119, C1113–C1132, C1126–C1141, C1146–C1160, C1153–C1173, and C1167–C1183. Ca(2+) is bound by residues W872, D875, D877, D879, D885, and E886. N929 carries N-linked (GlcNAc...) asparagine glycosylation. Residues W1033, D1036, D1038, D1040, D1046, and E1047 each contribute to the Ca(2+) site. N1051 carries an N-linked (GlcNAc...) asparagine glycan. Ca(2+)-binding residues include W1081, D1084, D1086, D1088, D1094, and E1095. Residue N1156 is glycosylated (N-linked (GlcNAc...) asparagine). N-linked (GlcNAc...) asparagine glycosylation is found at N1196 and N1219. LDL-receptor class B repeat units follow at residues 1310-1356, 1357-1399, 1400-1446, 1447-1491, and 1492-1532; these read SALY…DWIA, GNIY…DPRD, GILF…DYLE, KRIL…YGGE, and VYWT…YHPS. HAT repeat units lie at residues 1380–1413 and 1470–1503; these read TTLL…SLPR and MEVL…NTLA. N-linked (GlcNAc...) asparagine glycosylation is found at N1512, N1559, N1576, N1617, and N1646. LDL-receptor class B repeat units follow at residues 1628–1670, 1671–1714, 1715–1754, and 1755–1799; these read QRVY…DWVS, RNLF…HPLR, GKLY…DFPE, and SKLY…MGDK. The stretch at 1653-1684 is one HAT 4 repeat; the sequence is VVSADLPNAHGLAVDWVSRNLFWTSYDTNKKQ. N-linked (GlcNAc...) asparagine glycosylation is found at N1724, N1734, N1764, N1826, and N1934. LDL-receptor class B repeat units follow at residues 1935–1977, 1978–2020, 2021–2064, and 2065–2108; these read DTIY…DWIA, GNIY…HPEK, GYLF…DYQG, and GKLY…FEDF. A glycan (N-linked (GlcNAc...) asparagine) is linked at N1996. Position 2010 is an N6-acetyllysine (K2010). N-linked (GlcNAc...) asparagine glycosylation is present at N2049. N2118 and N2128 each carry an N-linked (GlcNAc...) asparagine glycan. LDL-receptor class B repeat units lie at residues 2254-2295, 2296-2344, 2345-2389, 2390-2432, and 2433-2474; these read NRIF…HRGW, DTLY…DECQ, NLMF…DHRA, EKLY…YGEH, and IFWT…VAND. 3 HAT repeats span residues 2277 to 2309, 2325 to 2358, and 2411 to 2444; these read TTIV…STIT, TVIT…LHPS, and HRYV…RAVQ. Residues N2473, N2503, and N2522 are each glycosylated (N-linked (GlcNAc...) asparagine). 7 LDL-receptor class A domains span residues 2524 to 2563, 2566 to 2602, 2605 to 2641, 2639 to 2690, 2696 to 2732, 2734 to 2771, and 2774 to 2814; these read SCRA…SYCN, RCKK…IPCN, ACGV…MNCS, NCSA…RDCP, RCPL…THCN, FCSE…AHCE, and TCGP…AGCL. 6 disulfide bridges follow: C2525–C2538, C2533–C2551, C2545–C2562, C2567–C2579, C2574–C2592, and C2586–C2601. An N-linked (GlcNAc...) asparagine glycan is attached at N2602. Intrachain disulfides connect C2606-C2618, C2613-C2631, C2625-C2640, C2640-C2667, C2645-C2680, C2674-C2689, C2697-C2709, C2704-C2722, C2716-C2731, C2735-C2747, C2742-C2760, C2754-C2770, C2775-C2788, C2782-C2801, and C2795-C2813. 2 N-linked (GlcNAc...) asparagine glycosylation sites follow: N2621 and N2639. Residue N2816 is glycosylated (N-linked (GlcNAc...) asparagine). LDL-receptor class A domains follow at residues 2818 to 2855, 2858 to 2899, and 2904 to 2941; these read TCDD…PECE, TCGP…PHCT, and KCNA…RGCH. 11 disulfide bridges follow: C2819–C2831, C2826–C2844, C2838–C2854, C2859–C2871, C2866–C2885, C2879–C2898, C2905–C2918, C2913–C2931, C2925–C2940, C2987–C2997, and C2993–C3006. N-linked (GlcNAc...) asparagine glycosylation is present at N2906. One can recognise an EGF-like 1; calcium-binding domain in the interval 2983 to 3018; that stretch reads DVDECSTTFPCSQLCINTHGSYKCLCVEGYAPRGGD. N3049 and N3090 each carry an N-linked (GlcNAc...) asparagine glycan. LDL-receptor class B repeat units lie at residues 3070 to 3114, 3115 to 3157, 3158 to 3201, 3202 to 3244, and 3245 to 3285; these read QMIY…DWVG, GNLY…DVQN, GYLY…DYVT, ERIY…FEDY, and VYWT…FHAL. 2 HAT repeats span residues 3128-3171 and 3224-3256; these read EVSK…HSLI and RHVV…KSIN. N-linked (GlcNAc...) asparagine glycosylation is found at N3265 and N3334. LDL-receptor class A domains follow at residues 3334–3371, 3374–3410, 3413–3450, 3453–3491, 3494–3533, 3536–3572, 3575–3611, 3613–3649, 3654–3692, 3695–3733, and 3741–3778; these read NCTA…PDCP, KCRP…ANCD, VCLP…RDCP, TCAP…ANCT, TCGV…EECD, TCEP…ESCT, PCSE…KDCT, RCDM…EACG, TCPL…EECT, QCPP…EDCE, and HCKD…EDCS. 33 disulfides stabilise this stretch: C3335–C3347, C3342–C3360, C3354–C3370, C3375–C3387, C3382–C3400, C3394–C3409, C3414–C3427, C3421–C3440, C3434–C3449, C3454–C3467, C3461–C3480, C3474–C3490, C3495–C3508, C3502–C3521, C3515–C3532, C3537–C3549, C3544–C3562, C3556–C3571, C3576–C3588, C3583–C3601, C3595–C3610, C3614–C3626, C3621–C3639, C3633–C3648, C3655–C3667, C3662–C3680, C3674–C3691, C3696–C3710, C3704–C3723, C3717–C3732, C3742–C3755, C3750–C3768, and C3762–C3777. N3489 carries an N-linked (GlcNAc...) asparagine glycan. Residue N3663 is glycosylated (N-linked (GlcNAc...) asparagine). N3789 and N3840 each carry an N-linked (GlcNAc...) asparagine glycan. An LDL-receptor class B 31 repeat occupies 3913–3925; the sequence is GRVYWTNWHTGTI. An N-linked (GlcNAc...) asparagine glycan is attached at N3954. LDL-receptor class B repeat units lie at residues 3971–4013, 4014–4057, and 4058–4102; these read GNVY…DPLR, GTMY…DYHN, and ERLY…FEDY. Residues 3995–4027 form an HAT 10 repeat; it reads TLISGMIDEPHAIVVDPLRGTMYWSDWGNHPKI. N-linked (GlcNAc...) asparagine glycans are attached at residues N4076, N4126, and N4180. 4 consecutive EGF-like domains span residues 4197–4230, 4233–4269, 4270–4302, and 4305–4341; these read RPGT…YTGD, ELDQ…PRCT, QQVC…FLGD, and QYRQ…TRCE. 10 cysteine pairs are disulfide-bonded: C4201–C4211, C4205–C4221, C4237–C4247, C4241–C4257, C4259–C4268, C4273–C4283, C4277–C4293, C4309–C4319, C4313–C4329, and C4331–C4340. N4280 is a glycosylation site (N-linked (GlcNAc...) asparagine). A glycan (N-linked (GlcNAc...) asparagine) is linked at N4365. The EGF-like 6 domain maps to 4376–4410; sequence LTCIDHCSNGGSCTMNSKMMPECQCPPHMTGPRCE. 3 disulfide bridges follow: C4378-C4388, C4382-C4398, and C4400-C4409. A helical transmembrane segment spans residues 4425–4445; sequence ILIPLLLLLLLLLVAGVVFWY. The Cytoplasmic segment spans residues 4446 to 4545; the sequence is KRRVRGAKGF…PEDEIGDPLA (100 aa). The segment at 4446 to 4545 is interaction with MAFB; the sequence is KRRVRGAKGF…PEDEIGDPLA (100 aa). T4461 carries the phosphothreonine modification. Y4508 carries the post-translational modification Phosphotyrosine. Residues S4518, S4521, and S4524 each carry the phosphoserine modification.

This sequence belongs to the LDLR family. As to quaternary structure, heterodimer of an 85-kDa membrane-bound carboxyl subunit and a non-covalently attached 515-kDa N-terminal subunit. Intracellular domain interacts with MAFB. Found in a complex with PID1/PCLI1, LRP1 and CUBNI. Interacts with SNX17, PID1/PCLI1, PDGF and CUBN. The intracellular domain interacts with SHC1, GULP1 and DAB1. Can weakly interact (via NPXY motif) with DAB2 (via PID domain); the interaction is enhanced by tyrosine phosphorylation of the NPXY motif. Interacts with MDK; promotes neuronal survival. Interacts with LRPAP1; this interaction is followed by rapid internalization. Interacts with uPA/PLAU and PAI1/SERPINE1, either individually or in complex with each other, leading to rapid endocytosis; this interaction is abolished in the presence of LRPAP1/RAP. Also interacts with tPA/PLAT alone or in complex with SERPINE1. Interacts with the urokinase receptor PLAUR; this interaction leads to PLAUR internalization and is impaired in the presence of SORL1. Interacts with PDGFB. Interacts with TAU/MAPT, leading to endocytosis; this interaction is reduced in the presence of LRPAP1/RAP. Interacts with IGFBP3. Interacts with ADGRG6. Cleaved into a 85 kDa membrane-spanning subunit (LRP-85) and a 515 kDa large extracellular domain (LRP-515) that remains non-covalently associated. Gamma-secretase-dependent cleavage of LRP-85 releases the intracellular domain from the membrane. In terms of processing, phosphorylated on serine and threonine residues. Post-translationally, phosphorylated on tyrosine residues upon stimulation with PDGF. Tyrosine phosphorylation promotes interaction with SHC1.

The protein resides in the cell membrane. It localises to the membrane. The protein localises to the coated pit. It is found in the golgi outpost. Its subcellular location is the cytoplasm. The protein resides in the cytoskeleton. It localises to the microtubule organizing center. The protein localises to the nucleus. Its function is as follows. Endocytic receptor involved in endocytosis and in phagocytosis of apoptotic cells. Required for early embryonic development. Involved in cellular lipid homeostasis. Involved in the plasma clearance of chylomicron remnants and activated LRPAP1 (alpha 2-macroglobulin), as well as the local metabolism of complexes between plasminogen activators and their endogenous inhibitors. Acts as an LRPAP1 alpha-2-macroglobulin receptor. Acts as a TAU/MAPT receptor and controls the endocytosis of TAU/MAPT as well as its subsequent spread. May modulate cellular events, such as APP metabolism, kinase-dependent intracellular signaling, neuronal calcium signaling as well as neurotransmission. Also acts as a receptor for IGFBP3 to mediate cell growth inhibition. The sequence is that of Prolow-density lipoprotein receptor-related protein 1 from Rattus norvegicus (Rat).